We begin with the raw amino-acid sequence, 337 residues long: Phenylalanine--tRNA ligase alpha subunit (337 aa).

Glu252 is a binding site for Mg(2+).

It belongs to the class-II aminoacyl-tRNA synthetase family. Phe-tRNA synthetase alpha subunit type 1 subfamily. In terms of assembly, tetramer of two alpha and two beta subunits. Mg(2+) serves as cofactor.

It localises to the cytoplasm. It catalyses the reaction tRNA(Phe) + L-phenylalanine + ATP = L-phenylalanyl-tRNA(Phe) + AMP + diphosphate + H(+). The sequence is that of Phenylalanine--tRNA ligase alpha subunit from Francisella tularensis subsp. novicida (strain U112).